The chain runs to 305 residues: LysM and putative peptidoglycan-binding domain-containing protein 3 (305 aa).

Residues 1-216 lie on the Extracellular side of the membrane; the sequence is MAGRNQNRTV…PYYGADWGIG (216 aa). 2 N-linked (GlcNAc...) asparagine glycosylation sites follow: Asn7 and Asn26. Ser55 carries the phosphoserine modification. The LysM domain maps to 65–109; sequence LTKDIQEGDTLNAVALQYCCTVADIKRVNNLISDQDFFALRSIKI. A glycan (N-linked (GlcNAc...) asparagine) is linked at Asn199. The helical transmembrane segment at 217–237 threads the bilayer; that stretch reads WWTAVVIMLIVGIITPVFYLL. The Cytoplasmic segment spans residues 238 to 305; the sequence is YYEILAKVDV…PQAHDAQHKT (68 aa). A disordered region spans residues 253-305; it reads VGSSHLHPGLTPPTQHREMENEIGPTKGIPVGQQDDHKLYRQDPQAHDAQHKT. A compositionally biased stretch (basic and acidic residues) spans 286-305; sequence QDDHKLYRQDPQAHDAQHKT.

It localises to the cell membrane. The protein resides in the golgi apparatus. Essential for Golgi structural integrity. The chain is LysM and putative peptidoglycan-binding domain-containing protein 3 (Lysmd3) from Mus musculus (Mouse).